The following is a 426-amino-acid chain: Adenylosuccinate synthetase (426 aa).

GTP is bound by residues 12–18 (GDEGKGK) and 40–42 (GHT). D13 functions as the Proton acceptor in the catalytic mechanism. Residues D13 and G40 each contribute to the Mg(2+) site. Residues 13-16 (DEGK), 38-41 (NAGH), T131, R145, Q226, T241, and R305 contribute to the IMP site. The active-site Proton donor is the H41. 301–307 (ATTGRKR) serves as a coordination point for substrate. GTP is bound by residues R307, 333–335 (KLD), and 415–417 (SVG).

Belongs to the adenylosuccinate synthetase family. Homodimer. The cofactor is Mg(2+).

It localises to the cytoplasm. It carries out the reaction IMP + L-aspartate + GTP = N(6)-(1,2-dicarboxyethyl)-AMP + GDP + phosphate + 2 H(+). It functions in the pathway purine metabolism; AMP biosynthesis via de novo pathway; AMP from IMP: step 1/2. In terms of biological role, plays an important role in the de novo pathway of purine nucleotide biosynthesis. Catalyzes the first committed step in the biosynthesis of AMP from IMP. The protein is Adenylosuccinate synthetase of Nitratidesulfovibrio vulgaris (strain DP4) (Desulfovibrio vulgaris).